We begin with the raw amino-acid sequence, 355 residues long: Elongation factor Ts (355 aa).

The segment at 82–85 (TDFV) is involved in Mg(2+) ion dislocation from EF-Tu.

This sequence belongs to the EF-Ts family.

The protein localises to the cytoplasm. In terms of biological role, associates with the EF-Tu.GDP complex and induces the exchange of GDP to GTP. It remains bound to the aminoacyl-tRNA.EF-Tu.GTP complex up to the GTP hydrolysis stage on the ribosome. This is Elongation factor Ts from Helicobacter pylori (strain HPAG1).